The following is a 704-amino-acid chain: Elongation factor G 2 (704 aa).

The region spanning 8-290 (ERYRNIGISA…AIIDYLPSPV (283 aa)) is the tr-type G domain. Residues 17-24 (AHIDAGKT), 88-92 (DTPGH), and 142-145 (NKMD) contribute to the GTP site.

The protein belongs to the TRAFAC class translation factor GTPase superfamily. Classic translation factor GTPase family. EF-G/EF-2 subfamily.

Its subcellular location is the cytoplasm. Functionally, catalyzes the GTP-dependent ribosomal translocation step during translation elongation. During this step, the ribosome changes from the pre-translocational (PRE) to the post-translocational (POST) state as the newly formed A-site-bound peptidyl-tRNA and P-site-bound deacylated tRNA move to the P and E sites, respectively. Catalyzes the coordinated movement of the two tRNA molecules, the mRNA and conformational changes in the ribosome. This chain is Elongation factor G 2, found in Polaromonas sp. (strain JS666 / ATCC BAA-500).